The sequence spans 176 residues: Nucleoside triphosphate/diphosphate phosphatase (176 aa).

The active-site Proton donor is the Arg23. Residues Asn87, Asp103, Asp105, Asp107, Asp120, and Glu123 each contribute to the Mg(2+) site.

The protein belongs to the Ntdp family. Mg(2+) serves as cofactor.

It carries out the reaction a ribonucleoside 5'-triphosphate + H2O = a ribonucleoside 5'-diphosphate + phosphate + H(+). It catalyses the reaction a ribonucleoside 5'-diphosphate + H2O = a ribonucleoside 5'-phosphate + phosphate + H(+). Its function is as follows. Has nucleoside phosphatase activity towards nucleoside triphosphates and nucleoside diphosphates. In Bacillus licheniformis (strain ATCC 14580 / DSM 13 / JCM 2505 / CCUG 7422 / NBRC 12200 / NCIMB 9375 / NCTC 10341 / NRRL NRS-1264 / Gibson 46), this protein is Nucleoside triphosphate/diphosphate phosphatase.